A 98-amino-acid chain; its full sequence is Large ribosomal subunit protein uL23 (98 aa).

The protein belongs to the universal ribosomal protein uL23 family. Part of the 50S ribosomal subunit. Contacts protein L29, and trigger factor when it is bound to the ribosome.

Its function is as follows. One of the early assembly proteins it binds 23S rRNA. One of the proteins that surrounds the polypeptide exit tunnel on the outside of the ribosome. Forms the main docking site for trigger factor binding to the ribosome. The polypeptide is Large ribosomal subunit protein uL23 (Methylorubrum extorquens (strain CM4 / NCIMB 13688) (Methylobacterium extorquens)).